Here is a 392-residue protein sequence, read N- to C-terminus: Phosphoglycerate kinase (392 aa).

Substrate contacts are provided by residues 21–23, Arg-36, 59–62, Arg-113, and Arg-146; these read DFN and HLGR. ATP contacts are provided by residues Lys-197, Glu-319, and 345 to 348; that span reads GGDT.

The protein belongs to the phosphoglycerate kinase family. As to quaternary structure, monomer.

It is found in the cytoplasm. The enzyme catalyses (2R)-3-phosphoglycerate + ATP = (2R)-3-phospho-glyceroyl phosphate + ADP. It functions in the pathway carbohydrate degradation; glycolysis; pyruvate from D-glyceraldehyde 3-phosphate: step 2/5. In Francisella philomiragia subsp. philomiragia (strain ATCC 25017 / CCUG 19701 / FSC 153 / O#319-036), this protein is Phosphoglycerate kinase.